Consider the following 154-residue polypeptide: 6,7-dimethyl-8-ribityllumazine synthase (154 aa).

Residues Phe23, Ala57–Glu59, and Ala81–Ile83 each bind 5-amino-6-(D-ribitylamino)uracil. Residue Ser86–Thr87 coordinates (2S)-2-hydroxy-3-oxobutyl phosphate. His89 (proton donor) is an active-site residue. A 5-amino-6-(D-ribitylamino)uracil-binding site is contributed by Phe114. Arg128 provides a ligand contact to (2S)-2-hydroxy-3-oxobutyl phosphate.

This sequence belongs to the DMRL synthase family.

The enzyme catalyses (2S)-2-hydroxy-3-oxobutyl phosphate + 5-amino-6-(D-ribitylamino)uracil = 6,7-dimethyl-8-(1-D-ribityl)lumazine + phosphate + 2 H2O + H(+). It participates in cofactor biosynthesis; riboflavin biosynthesis; riboflavin from 2-hydroxy-3-oxobutyl phosphate and 5-amino-6-(D-ribitylamino)uracil: step 1/2. Its function is as follows. Catalyzes the formation of 6,7-dimethyl-8-ribityllumazine by condensation of 5-amino-6-(D-ribitylamino)uracil with 3,4-dihydroxy-2-butanone 4-phosphate. This is the penultimate step in the biosynthesis of riboflavin. This chain is 6,7-dimethyl-8-ribityllumazine synthase, found in Nitratiruptor sp. (strain SB155-2).